Here is a 381-residue protein sequence, read N- to C-terminus: Cytochrome b (381 aa).

The next 4 membrane-spanning stretches (helical) occupy residues 34–54 (FGSLLGLCLIIQILTGLFLAM), 78–99 (WLIRNIHANGASLFFICVYLHI), 114–134 (WNIGVILLFLLMATAFVGYVL), and 179–199 (FFAFHFLLPFLILALTIIHLL). Residues histidine 84 and histidine 98 each coordinate heme b. Histidine 183 and histidine 197 together coordinate heme b. Histidine 202 contributes to the a ubiquinone binding site. Transmembrane regions (helical) follow at residues 227–247 (YKDLLGFFVMIFFLTTLALFM), 289–309 (LGGVLALLFSIFILMLVPLLH), 321–341 (LTQIFFWLLVANSIILTWIGG), and 348–368 (FITVGQIASVSYFSLFLIIMP).

This sequence belongs to the cytochrome b family. As to quaternary structure, the cytochrome bc1 complex contains 3 respiratory subunits (MT-CYB, CYC1 and UQCRFS1), 2 core proteins (UQCRC1 and UQCRC2) and probably 6 low-molecular weight proteins. It depends on heme b as a cofactor.

The protein resides in the mitochondrion inner membrane. Component of the ubiquinol-cytochrome c reductase complex (complex III or cytochrome b-c1 complex) that is part of the mitochondrial respiratory chain. The b-c1 complex mediates electron transfer from ubiquinol to cytochrome c. Contributes to the generation of a proton gradient across the mitochondrial membrane that is then used for ATP synthesis. The protein is Cytochrome b (mt-cyb) of Sphyrna tiburo tiburo (Hammerhead shark).